Reading from the N-terminus, the 357-residue chain is Phosphoribosylformylglycinamidine cyclo-ligase (357 aa).

The protein belongs to the AIR synthase family.

The protein resides in the cytoplasm. The catalysed reaction is 2-formamido-N(1)-(5-O-phospho-beta-D-ribosyl)acetamidine + ATP = 5-amino-1-(5-phospho-beta-D-ribosyl)imidazole + ADP + phosphate + H(+). It functions in the pathway purine metabolism; IMP biosynthesis via de novo pathway; 5-amino-1-(5-phospho-D-ribosyl)imidazole from N(2)-formyl-N(1)-(5-phospho-D-ribosyl)glycinamide: step 2/2. This Agrobacterium fabrum (strain C58 / ATCC 33970) (Agrobacterium tumefaciens (strain C58)) protein is Phosphoribosylformylglycinamidine cyclo-ligase.